The following is a 190-amino-acid chain: Pyridoxal 5'-phosphate synthase subunit PdxT (190 aa).

An L-glutamine-binding site is contributed by 46-48 (GES). The Nucleophile role is filled by C78. L-glutamine is bound by residues R105 and 138-139 (IR). Catalysis depends on charge relay system residues H174 and E176.

It belongs to the glutaminase PdxT/SNO family. In terms of assembly, in the presence of PdxS, forms a dodecamer of heterodimers. Only shows activity in the heterodimer.

The enzyme catalyses aldehydo-D-ribose 5-phosphate + D-glyceraldehyde 3-phosphate + L-glutamine = pyridoxal 5'-phosphate + L-glutamate + phosphate + 3 H2O + H(+). The catalysed reaction is L-glutamine + H2O = L-glutamate + NH4(+). It participates in cofactor biosynthesis; pyridoxal 5'-phosphate biosynthesis. Its function is as follows. Catalyzes the hydrolysis of glutamine to glutamate and ammonia as part of the biosynthesis of pyridoxal 5'-phosphate. The resulting ammonia molecule is channeled to the active site of PdxS. The protein is Pyridoxal 5'-phosphate synthase subunit PdxT of Bifidobacterium longum (strain NCC 2705).